The sequence spans 185 residues: Ribosome-recycling factor (185 aa).

Positions 143 to 163 (RKDGEAGEDEVARAEKDLDKS) are disordered.

The protein belongs to the RRF family.

It is found in the cytoplasm. In terms of biological role, responsible for the release of ribosomes from messenger RNA at the termination of protein biosynthesis. May increase the efficiency of translation by recycling ribosomes from one round of translation to another. The polypeptide is Ribosome-recycling factor (Mycobacterium marinum (strain ATCC BAA-535 / M)).